A 432-amino-acid polypeptide reads, in one-letter code: Glutamyl-tRNA reductase (432 aa).

Substrate is bound by residues 50–53 (TCNR), serine 110, 115–117 (ETQ), and glutamine 121. Cysteine 51 acts as the Nucleophile in catalysis. 190 to 195 (GAGEMG) provides a ligand contact to NADP(+).

It belongs to the glutamyl-tRNA reductase family. Homodimer.

It carries out the reaction (S)-4-amino-5-oxopentanoate + tRNA(Glu) + NADP(+) = L-glutamyl-tRNA(Glu) + NADPH + H(+). It functions in the pathway porphyrin-containing compound metabolism; protoporphyrin-IX biosynthesis; 5-aminolevulinate from L-glutamyl-tRNA(Glu): step 1/2. In terms of biological role, catalyzes the NADPH-dependent reduction of glutamyl-tRNA(Glu) to glutamate 1-semialdehyde (GSA). In Nitratiruptor sp. (strain SB155-2), this protein is Glutamyl-tRNA reductase.